The chain runs to 657 residues: tRNA 5-methylaminomethyl-2-thiouridine biosynthesis bifunctional protein MnmC (657 aa).

Positions 1–235 are tRNA (mnm(5)s(2)U34)-methyltransferase; the sequence is MSDAHNAQLD…KREMLAGPFQ (235 aa). The tract at residues 261-657 is FAD-dependent cmnm(5)s(2)U34 oxidoreductase; sequence IGAGLAGCAT…QLIRGTGSPT (397 aa).

In the N-terminal section; belongs to the methyltransferase superfamily. tRNA (mnm(5)s(2)U34)-methyltransferase family. The protein in the C-terminal section; belongs to the DAO family. It depends on FAD as a cofactor.

It is found in the cytoplasm. It carries out the reaction 5-aminomethyl-2-thiouridine(34) in tRNA + S-adenosyl-L-methionine = 5-methylaminomethyl-2-thiouridine(34) in tRNA + S-adenosyl-L-homocysteine + H(+). Functionally, catalyzes the last two steps in the biosynthesis of 5-methylaminomethyl-2-thiouridine (mnm(5)s(2)U) at the wobble position (U34) in tRNA. Catalyzes the FAD-dependent demodification of cmnm(5)s(2)U34 to nm(5)s(2)U34, followed by the transfer of a methyl group from S-adenosyl-L-methionine to nm(5)s(2)U34, to form mnm(5)s(2)U34. In Ectopseudomonas mendocina (strain ymp) (Pseudomonas mendocina), this protein is tRNA 5-methylaminomethyl-2-thiouridine biosynthesis bifunctional protein MnmC.